A 117-amino-acid chain; its full sequence is Large ribosomal subunit protein bL20 (117 aa).

This sequence belongs to the bacterial ribosomal protein bL20 family.

In terms of biological role, binds directly to 23S ribosomal RNA and is necessary for the in vitro assembly process of the 50S ribosomal subunit. It is not involved in the protein synthesizing functions of that subunit. The sequence is that of Large ribosomal subunit protein bL20 from Finegoldia magna (strain ATCC 29328 / DSM 20472 / WAL 2508) (Peptostreptococcus magnus).